A 222-amino-acid polypeptide reads, in one-letter code: Ribonuclease HII (222 aa).

The RNase H type-2 domain occupies 17–206 (DLVAGVDEVG…VRAAHEARAS (190 aa)). Residues Asp-23, Glu-24, and Asp-115 each coordinate a divalent metal cation.

The protein belongs to the RNase HII family. It depends on Mn(2+) as a cofactor. Requires Mg(2+) as cofactor.

Its subcellular location is the cytoplasm. It carries out the reaction Endonucleolytic cleavage to 5'-phosphomonoester.. Its function is as follows. Endonuclease that specifically degrades the RNA of RNA-DNA hybrids. This Pseudomonas savastanoi pv. phaseolicola (strain 1448A / Race 6) (Pseudomonas syringae pv. phaseolicola (strain 1448A / Race 6)) protein is Ribonuclease HII.